The following is a 986-amino-acid chain: Ephrin type-A receptor 4-A (986 aa).

Residues 1 to 20 (MAGIVHGILFCGLFGLCWAV) form the signal peptide. At 21 to 547 (TGSRIYPASE…MIGEGASPTV (527 aa)) the chain is on the extracellular side. The Eph LBD domain maps to 30-209 (EVTLLDSRSV…FYKKCPLTVR (180 aa)). 2 consecutive Fibronectin type-III domains span residues 328 to 438 (PPSA…TNQA) and 439 to 536 (APST…TVPS). N-linked (GlcNAc...) asparagine glycans are attached at residues Asn-340 and Asn-407. A helical transmembrane segment spans residues 548-569 (LLVSVAGSIVLVVILIAAFVIS). Residues 570–986 (RRRSKYSKAK…QQIQGRMVPV (417 aa)) lie on the Cytoplasmic side of the membrane. 2 positions are modified to phosphotyrosine; by autocatalysis: Tyr-595 and Tyr-601. A Protein kinase domain is found at 620-881 (IKIEKVIGVG…QIVSMLDKLI (262 aa)). ATP is bound by residues 626–634 (IGVGEFGEV) and Lys-652. The active-site Proton acceptor is the Asp-745. Tyr-778 and Tyr-928 each carry phosphotyrosine; by autocatalysis. The region spanning 911–975 (SQVASVLDWL…LSSVQGMRTQ (65 aa)) is the SAM domain. A PDZ-binding motif is present at residues 984-986 (VPV).

It belongs to the protein kinase superfamily. Tyr protein kinase family. Ephrin receptor subfamily.

It localises to the cell membrane. It is found in the early endosome. It carries out the reaction L-tyrosyl-[protein] + ATP = O-phospho-L-tyrosyl-[protein] + ADP + H(+). In terms of biological role, receptor tyrosine kinase which binds membrane-bound ephrin family ligands residing on adjacent cells, leading to contact-dependent bidirectional signaling into neighboring cells. The signaling pathway downstream of the receptor is referred to as forward signaling while the signaling pathway downstream of the ephrin ligand is referred to as reverse signaling. Highly promiscuous, it has the unique property among Eph receptors to bind and to be physiologically activated by both GPI-anchored ephrin-A and transmembrane ephrin-B ligands including EFNA1 and EFNB3. Upon activation by ephrin ligands, modulates cell morphology and integrin-dependent cell adhesion through regulation of the Rac, Rap and Rho GTPases activity. Plays an important role in the development of the nervous system controlling different steps of axonal guidance including the establishment of the corticospinal projections. The sequence is that of Ephrin type-A receptor 4-A (epha4-a) from Xenopus laevis (African clawed frog).